Here is a 198-residue protein sequence, read N- to C-terminus: Neutrophil gelatinase-associated lipocalin (198 aa).

Residues 1-20 (MGLGVLCLALVLLGVLQSQA) form the signal peptide. Glutamine 21 bears the Pyrrolidone carboxylic acid mark. Position 72 to 74 (72 to 74 (YST)) interacts with a carboxymycobactin. N-linked (GlcNAc...) asparagine glycosylation occurs at asparagine 85. Cysteine 96 and cysteine 195 are joined by a disulfide. Position 126 (tyrosine 126) interacts with enterobactin. A carboxymycobactin contacts are provided by lysine 145, lysine 154, and tyrosine 158. Lysine 154 is a binding site for enterobactin.

Belongs to the calycin superfamily. Lipocalin family. In terms of assembly, monomer. Homodimer; disulfide-linked. Heterodimer; disulfide-linked with MMP9. Detected in the ureteric bud in embryonic kidney (at protein level).

The protein resides in the secreted. It is found in the cytoplasmic granule lumen. The protein localises to the cytoplasmic vesicle lumen. In terms of biological role, iron-trafficking protein involved in multiple processes such as apoptosis, innate immunity and renal development. Binds iron through association with 2,3-dihydroxybenzoic acid (2,3-DHBA), a siderophore that shares structural similarities with bacterial enterobactin, and delivers or removes iron from the cell, depending on the context. Iron-bound form (holo-24p3) is internalized following binding to the SLC22A17 (24p3R) receptor, leading to release of iron and subsequent increase of intracellular iron concentration. In contrast, association of the iron-free form (apo-24p3) with the SLC22A17 (24p3R) receptor is followed by association with an intracellular siderophore, iron chelation and iron transfer to the extracellular medium, thereby reducing intracellular iron concentration. Involved in apoptosis due to interleukin-3 (IL3) deprivation: iron-loaded form increases intracellular iron concentration without promoting apoptosis, while iron-free form decreases intracellular iron levels, inducing expression of the proapoptotic protein BCL2L11/BIM, resulting in apoptosis. Involved in innate immunity; limits bacterial proliferation by sequestering iron bound to microbial siderophores, such as enterobactin. Can also bind siderophores from M.tuberculosis. In Rattus norvegicus (Rat), this protein is Neutrophil gelatinase-associated lipocalin (Lcn2).